The chain runs to 663 residues: DNA ligase (663 aa).

NAD(+) contacts are provided by residues 33-37 (DYSYD), 82-83 (SI), and glutamate 112. Lysine 114 (N6-AMP-lysine intermediate) is an active-site residue. NAD(+) is bound by residues arginine 135, glutamate 171, lysine 285, and lysine 309. Zn(2+)-binding residues include cysteine 403, cysteine 406, cysteine 419, and cysteine 424. Residues 581 to 663 (DKEAPLQGKV…SRILDAKSVS (83 aa)) form the BRCT domain.

Belongs to the NAD-dependent DNA ligase family. LigA subfamily. The cofactor is Mg(2+). Requires Mn(2+) as cofactor.

It catalyses the reaction NAD(+) + (deoxyribonucleotide)n-3'-hydroxyl + 5'-phospho-(deoxyribonucleotide)m = (deoxyribonucleotide)n+m + AMP + beta-nicotinamide D-nucleotide.. Its function is as follows. DNA ligase that catalyzes the formation of phosphodiester linkages between 5'-phosphoryl and 3'-hydroxyl groups in double-stranded DNA using NAD as a coenzyme and as the energy source for the reaction. It is essential for DNA replication and repair of damaged DNA. In Chlamydia trachomatis serovar L2 (strain ATCC VR-902B / DSM 19102 / 434/Bu), this protein is DNA ligase.